A 382-amino-acid chain; its full sequence is Chaperone protein DnaJ (382 aa).

Positions 5 to 70 constitute a J domain; sequence DYYEVLGVSR…DKKAAYDRYG (66 aa). The segment at 141–219 adopts a CR-type zinc-finger fold; the sequence is GVQKTINVPA…CHGAGRVEKE (79 aa). Residues Cys154, Cys157, Cys171, Cys174, Cys193, Cys196, Cys207, and Cys210 each contribute to the Zn(2+) site. 4 CXXCXGXG motif repeats span residues 154–161, 171–178, 193–200, and 207–214; these read CDACKGTG, CPTCSGMG, CPTCNGMG, and CKVCHGAG.

The protein belongs to the DnaJ family. In terms of assembly, homodimer. It depends on Zn(2+) as a cofactor.

Its subcellular location is the cytoplasm. Participates actively in the response to hyperosmotic and heat shock by preventing the aggregation of stress-denatured proteins and by disaggregating proteins, also in an autonomous, DnaK-independent fashion. Unfolded proteins bind initially to DnaJ; upon interaction with the DnaJ-bound protein, DnaK hydrolyzes its bound ATP, resulting in the formation of a stable complex. GrpE releases ADP from DnaK; ATP binding to DnaK triggers the release of the substrate protein, thus completing the reaction cycle. Several rounds of ATP-dependent interactions between DnaJ, DnaK and GrpE are required for fully efficient folding. Also involved, together with DnaK and GrpE, in the DNA replication of plasmids through activation of initiation proteins. The sequence is that of Chaperone protein DnaJ from Cereibacter sphaeroides (strain ATCC 17029 / ATH 2.4.9) (Rhodobacter sphaeroides).